The following is a 65-amino-acid chain: Large ribosomal subunit protein bL32 (65 aa).

Belongs to the bacterial ribosomal protein bL32 family.

In Tropheryma whipplei (strain TW08/27) (Whipple's bacillus), this protein is Large ribosomal subunit protein bL32.